Here is a 624-residue protein sequence, read N- to C-terminus: Diatom spindle kinesin-1 (624 aa).

The tract at residues 1 to 59 (MNAANRRKSTSTVGITGRKDATRMKIEQMEKERKERRKTMMQRKEARKQEHMKNIEAGN) is disordered. A globular region spans residues 1 to 85 (MNAANRRKST…QENKIGDKSP (85 aa)). Composition is skewed to basic and acidic residues over residues 17–33 (GRKD…EKER) and 42–54 (QRKE…HMKN). One can recognise a Kinesin motor domain in the interval 95–411 (NICIAVRKRP…LRYADRIKEQ (317 aa)). ATP is bound at residue 186–193 (GQTGSGKT). A coiled-coil region spans residues 426–624 (SNREIMPSKE…LARQVQLTQY (199 aa)). Residues 478-511 (VDEEEADDEEGDYEEESEDLDYEDSEGQDYEEAV) show a composition bias toward acidic residues. Residues 478–528 (VDEEEADDEEGDYEEESEDLDYEDSEGQDYEEAVESQYDHSQEAQEGEEEL) form a disordered region.

It belongs to the TRAFAC class myosin-kinesin ATPase superfamily. Kinesin family. MCAK/KIF2 subfamily.

It localises to the cytoplasm. The protein localises to the cytoskeleton. In terms of biological role, involved in anaphase spindle elongation. This Cylindrotheca fusiformis (Marine diatom) protein is Diatom spindle kinesin-1 (DSK1).